A 645-amino-acid chain; its full sequence is L-aspartate oxidase, chloroplastic (645 aa).

The N-terminal 70 residues, 1 to 70 (MAALMNGFGS…RMRHKVGSIR (70 aa)), are a transit peptide targeting the chloroplast. Residues 92 to 95 (SGVA), lysine 114, 121 to 128 (NTNYAQGG), and aspartate 292 each bind FAD. Arginine 368 acts as the Proton donor/acceptor in catalysis. Residues glutamate 453 and 469-470 (SL) each bind FAD.

The protein belongs to the FAD-dependent oxidoreductase 2 family. NadB subfamily. FAD serves as cofactor.

The protein resides in the plastid. The protein localises to the chloroplast. It catalyses the reaction L-aspartate + O2 = iminosuccinate + H2O2. It functions in the pathway cofactor biosynthesis; NAD(+) biosynthesis; iminoaspartate from L-aspartate (oxidase route): step 1/1. In terms of biological role, catalyzes the oxidation of L-aspartate to iminoaspartate. This chain is L-aspartate oxidase, chloroplastic, found in Oryza sativa subsp. japonica (Rice).